The following is a 108-amino-acid chain: Glutaredoxin-1 (108 aa).

The region spanning 3–106 (EEFVQQRLAN…DILSSIGVLR (104 aa)) is the Glutaredoxin domain. Residues Cys-23 and Cys-26 are joined by a disulfide bond.

It belongs to the glutaredoxin family.

The protein localises to the virion. Functionally, displays thioltransferase and dehydroascorbate reductase activities. This Vaccinia virus (strain Copenhagen) (VACV) protein is Glutaredoxin-1 (OPG075).